The chain runs to 335 residues: Putative D-threonate 4-phosphate dehydrogenase (335 aa).

2 residues coordinate substrate: His140 and Thr141. The a divalent metal cation site is built by His170, His214, and His269. 2 residues coordinate substrate: Lys277 and Arg295.

Belongs to the PdxA family. PdxA2 subfamily. Homodimer. Requires a divalent metal cation as cofactor.

It carries out the reaction 4-O-phospho-D-threonate + NAD(+) = dihydroxyacetone phosphate + CO2 + NADH. In terms of biological role, catalyzes the NAD-dependent oxidation and subsequent decarboxylation of D-threonate 4-phosphate to produce dihydroxyacetone phosphate (DHAP). This Symbiobacterium thermophilum (strain DSM 24528 / JCM 14929 / IAM 14863 / T) protein is Putative D-threonate 4-phosphate dehydrogenase.